Reading from the N-terminus, the 487-residue chain is Glycogen synthase (487 aa).

Lys-20 serves as a coordination point for ADP-alpha-D-glucose.

The protein belongs to the glycosyltransferase 1 family. Bacterial/plant glycogen synthase subfamily.

It catalyses the reaction [(1-&gt;4)-alpha-D-glucosyl](n) + ADP-alpha-D-glucose = [(1-&gt;4)-alpha-D-glucosyl](n+1) + ADP + H(+). It functions in the pathway glycan biosynthesis; glycogen biosynthesis. Synthesizes alpha-1,4-glucan chains using ADP-glucose. This Aliivibrio fischeri (strain ATCC 700601 / ES114) (Vibrio fischeri) protein is Glycogen synthase.